The primary structure comprises 428 residues: Cytochrome bc complex cytochrome b subunit (428 aa).

2 stretches are compositionally biased toward low complexity: residues 1 to 15 (MAEN…TAPA) and 21 to 52 (APGA…AAAP). The tract at residues 1 to 72 (MAENTPKPAA…RPDPNPFKDS (72 aa)) is disordered. Positions 59–72 (PPVDRPDPNPFKDS) are enriched in basic and acidic residues. Residues 110–130 (YFGGLGLFFFVIQILTGLLLL) traverse the membrane as a helical segment. Residues H161 and H175 each contribute to the heme b site. A run of 6 helical transmembrane segments spans residues 162–182 (AWSA…TFFM), 193–213 (WVSG…GYLL), 260–280 (LHVV…LTLV), 312–331 (GIGW…MFPW), 369–389 (ELLA…VPFI), and 401–421 (IFTI…YRVY). The heme b site is built by H261 and H276.

This sequence belongs to the cytochrome b family. The cofactor is heme b.

It is found in the cell inner membrane. In terms of biological role, component of the green S-bacteria bc complex, which consists of the Rieske protein and cytochrome b subunit but appears to lack a cytochrome c1-equivalent. This complex has a comparatively low redox potential. This Chlorobaculum thiosulfatiphilum (Chlorobium limicola f.sp. thiosulfatophilum) protein is Cytochrome bc complex cytochrome b subunit (petB).